A 970-amino-acid polypeptide reads, in one-letter code: Transposase for insertion sequence element IS1071 in transposon Tn5271 (970 aa).

It belongs to the transposase 7 family.

In terms of biological role, required for transposition of transposon Tn5271. This is Transposase for insertion sequence element IS1071 in transposon Tn5271 from Comamonas testosteroni (Pseudomonas testosteroni).